The following is a 460-amino-acid chain: Interleukin-1 receptor-associated kinase 4 (460 aa).

An N-acetylmethionine modification is found at methionine 1. Residues 20 to 104 (RKLSDFIDPQ…APASLLLPDA (85 aa)) enclose the Death domain. Residue lysine 34 is modified to N6-acetyllysine. One can recognise a Protein kinase domain in the interval 186–454 (SVGGNKMGEG…PDIKKVQQLL (269 aa)). ATP-binding positions include 192–200 (MGEGGFGVV) and lysine 213. The Proton acceptor role is filled by aspartate 311. Residues 313–316 (KSAN) and aspartate 329 each bind ATP. Residues threonine 342 and threonine 345 each carry the phosphothreonine modification. A Phosphoserine modification is found at serine 346.

Belongs to the protein kinase superfamily. TKL Ser/Thr protein kinase family. Pelle subfamily. Associates with MYD88 and IRAK2 to form a ternary complex called the Myddosome. Once phosphorylated, IRAK4 dissociates from the receptor complex and then associates with the TNF receptor-associated factor 6 (TRAF6), IRAK1, and PELI1; this intermediate complex is required for subsequent NF-kappa-B activation. Direct binding of SMAD6 to PELI1 prevents complex formation and hence negatively regulates IL1R-TLR signaling and eventually NF-kappa-B-mediated gene expression. Interacts with IL1RL1. Interacts (when phosphorylated) with IRAK1. May interact (when phosphorylated) with IRAK3. It depends on Mg(2+) as a cofactor. In terms of processing, phosphorylated.

It localises to the cytoplasm. The catalysed reaction is L-seryl-[protein] + ATP = O-phospho-L-seryl-[protein] + ADP + H(+). The enzyme catalyses L-threonyl-[protein] + ATP = O-phospho-L-threonyl-[protein] + ADP + H(+). In terms of biological role, serine/threonine-protein kinase that plays a critical role in initiating innate immune response against foreign pathogens. Involved in Toll-like receptor (TLR) and IL-1R signaling pathways. Is rapidly recruited by MYD88 to the receptor-signaling complex upon TLR activation to form the Myddosome together with IRAK2. Phosphorylates initially IRAK1, thus stimulating the kinase activity and intensive autophosphorylation of IRAK1. Phosphorylates E3 ubiquitin ligases Pellino proteins (PELI1, PELI2 and PELI3) to promote pellino-mediated polyubiquitination of IRAK1. Then, the ubiquitin-binding domain of IKBKG/NEMO binds to polyubiquitinated IRAK1 bringing together the IRAK1-MAP3K7/TAK1-TRAF6 complex and the NEMO-IKKA-IKKB complex. In turn, MAP3K7/TAK1 activates IKKs (CHUK/IKKA and IKBKB/IKKB) leading to NF-kappa-B nuclear translocation and activation. Alternatively, phosphorylates TIRAP to promote its ubiquitination and subsequent degradation. Phosphorylates NCF1 and regulates NADPH oxidase activation after LPS stimulation suggesting a similar mechanism during microbial infections. In Homo sapiens (Human), this protein is Interleukin-1 receptor-associated kinase 4 (IRAK4).